The following is a 149-amino-acid chain: Calmodulin (149 aa).

Position 2 is an N-acetylalanine (Ala2). EF-hand domains are found at residues 8–43 (EQIAEFKEAFSLFDKDGDGTITTKELGTVMRSLGQN), 44–79 (PTEAELQDMINEVDADGDGTIDFPEFLTMMARKMKD), 81–116 (DSEEEIREAFRVFDKDGDGFISAAELRHVMTNLGEK), and 117–149 (LTDEEVDEMIREADIDGDGQVNYEEFVKMMTSK). 14 residues coordinate Ca(2+): Asp21, Asp23, Asp25, Thr27, Glu32, Asp57, Asp59, Asp61, Thr63, Glu68, Asp94, Asp96, Asp98, and Glu105. Position 116 is an N6,N6,N6-trimethyllysine (Lys116). Ca(2+) contacts are provided by Asp130, Asp132, Asp134, Gln136, and Glu141.

It belongs to the calmodulin family.

In terms of biological role, calmodulin mediates the control of a large number of enzymes, ion channels and other proteins by Ca(2+). Among the enzymes to be stimulated by the calmodulin-Ca(2+) complex are a number of protein kinases and phosphatases. This Renilla reniformis (Sea pansy) protein is Calmodulin.